Reading from the N-terminus, the 312-residue chain is L-lactate dehydrogenase (312 aa).

The NAD(+) site is built by Val14, Asp35, and Tyr66. Substrate is bound by residues Gln83 and Arg90. Residues Ser103, Ala120 to Asn122, and Ser145 contribute to the NAD(+) site. Position 122–125 (Asn122–Asp125) interacts with substrate. Position 150–153 (Asp150–Arg153) interacts with substrate. Residue His177 is the Proton acceptor of the active site. Position 220 is a phosphotyrosine (Tyr220). Thr229 provides a ligand contact to substrate.

Belongs to the LDH/MDH superfamily. LDH family. In terms of assembly, homotetramer.

The protein localises to the cytoplasm. It carries out the reaction (S)-lactate + NAD(+) = pyruvate + NADH + H(+). The protein operates within fermentation; pyruvate fermentation to lactate; (S)-lactate from pyruvate: step 1/1. In terms of biological role, catalyzes the conversion of lactate to pyruvate. In Mycoplasma genitalium (strain ATCC 33530 / DSM 19775 / NCTC 10195 / G37) (Mycoplasmoides genitalium), this protein is L-lactate dehydrogenase.